Reading from the N-terminus, the 204-residue chain is Putative peptidase PfaP (204 aa).

Positions 1–27 (MRLRKTRKIVVSMKDMAASGGYYIASS) are cleaved as a signal peptide. Ser-19 acts as the Nucleophile in catalysis. Lys-70 (proton donor/acceptor) is an active-site residue.

It belongs to the peptidase S49 family.

In terms of biological role, possible protease. May be involved in export of periplasmic flagella proteins. This Leptospira borgpetersenii protein is Putative peptidase PfaP (pfaP).